The primary structure comprises 262 residues: Flap endonuclease Xni (262 aa).

Residue Asp-105 coordinates Mg(2+). Residues 162-257 (ERSQFLDLMA…FRVIDSPPEK (96 aa)) enclose the 5'-3' exonuclease domain. Positions 172, 173, 181, 183, and 186 each coordinate K(+). The interaction with DNA stretch occupies residues 185-190 (GIGPKS).

It belongs to the Xni family. Mg(2+) serves as cofactor. Requires K(+) as cofactor.

Its function is as follows. Has flap endonuclease activity. During DNA replication, flap endonucleases cleave the 5'-overhanging flap structure that is generated by displacement synthesis when DNA polymerase encounters the 5'-end of a downstream Okazaki fragment. The chain is Flap endonuclease Xni from Shewanella baltica (strain OS155 / ATCC BAA-1091).